A 208-amino-acid chain; its full sequence is Probable GTP-binding protein EngB (208 aa).

The EngB-type G domain occupies 18–187 (KQFEICVIGR…FALMKKVVIQ (170 aa)). GTP contacts are provided by residues 26-33 (GRSNVGKS), 52-56 (GRTQL), 69-72 (DLPG), 135-138 (NKLD), and 166-168 (VSA). Mg(2+) is bound by residues Ser-33 and Thr-54.

It belongs to the TRAFAC class TrmE-Era-EngA-EngB-Septin-like GTPase superfamily. EngB GTPase family. It depends on Mg(2+) as a cofactor.

Necessary for normal cell division and for the maintenance of normal septation. This chain is Probable GTP-binding protein EngB, found in Ureaplasma parvum serovar 3 (strain ATCC 27815 / 27 / NCTC 11736).